A 91-amino-acid polypeptide reads, in one-letter code: Large ribosomal subunit protein eL37 (91 aa).

Positions 19, 22, 34, and 37 each coordinate Zn(2+). The C4-type zinc-finger motif lies at 19–37 (CRRCGKSSFHIQKKTCASC).

Belongs to the eukaryotic ribosomal protein eL37 family. Zn(2+) serves as cofactor.

Binds to the 23S rRNA. The chain is Large ribosomal subunit protein eL37 (rpl37) from Dictyostelium discoideum (Social amoeba).